Here is a 306-residue protein sequence, read N- to C-terminus: Esterase tropF (306 aa).

Residues S147, D248, and H276 each act as charge relay system in the active site.

Belongs to the LovG family.

The protein operates within secondary metabolite biosynthesis. In terms of biological role, esterase; part of the gene cluster that mediates the biosynthesis of the tropolone class of fungal maleic anhydrides. The pathway begins with the synthesis of 3-methylorcinaldehyde by the non-reducing polyketide synthase (PKS) tropA. 3-methylorcinaldehyde is the substrate for the FAD-dependent monooxygenase tropB to yield a dearomatized hydroxycyclohexadione. The 2-oxoglutarate-dependent dioxygenase tropC then performs the oxidative ring expansion to provide the first tropolone metabolite stipitaldehyde. Trop D converts stipitaldehyde into stipitacetal which is in turn converted to stipitalide by the short-chain dehydrogenase/reductase tropE. The next steps involve tropF, tropG, tropH, tropI and tropJ to form successive tropolone maleic anhydrides including stipitaldehydic, stipitatonic and stipitatic acids. The sequence is that of Esterase tropF from Talaromyces stipitatus (strain ATCC 10500 / CBS 375.48 / QM 6759 / NRRL 1006) (Penicillium stipitatum).